A 270-amino-acid chain; its full sequence is MSKIAKTAIISPKAEINKGVEIGEFCVIGDGVKLDEGVKLHNNVTLQGHTFIGKNTEIFPFAVLGTQPQDLKYKGEYSELIIGEDNLIREFCMINPGTEGGIKKTLIGDKNLLMAYVHVAHDCVIGSHCILANGVTLAGHIEIGDYVNIGGLTAIHQFVRIAKGCMIAGKSALGKDVPPYCTVEGNRAFIRGLNRHRMRQLLESKDIDFIHVLYKRLFRPVPSLRESAKLELEEHANNPFVKEICSFILESSRGVAYKSSEYSSEEKQEE.

The protein belongs to the transferase hexapeptide repeat family. LpxA subfamily. Homotrimer.

Its subcellular location is the cytoplasm. It catalyses the reaction a (3R)-hydroxyacyl-[ACP] + UDP-N-acetyl-alpha-D-glucosamine = a UDP-3-O-[(3R)-3-hydroxyacyl]-N-acetyl-alpha-D-glucosamine + holo-[ACP]. Its pathway is glycolipid biosynthesis; lipid IV(A) biosynthesis; lipid IV(A) from (3R)-3-hydroxytetradecanoyl-[acyl-carrier-protein] and UDP-N-acetyl-alpha-D-glucosamine: step 1/6. Involved in the biosynthesis of lipid A, a phosphorylated glycolipid that anchors the lipopolysaccharide to the outer membrane of the cell. The protein is Acyl-[acyl-carrier-protein]--UDP-N-acetylglucosamine O-acyltransferase of Helicobacter pylori (strain HPAG1).